We begin with the raw amino-acid sequence, 355 residues long: Eukaryotic initiation factor 4A-13 (355 aa).

A Q motif motif is present at residues 40-68 (DSFDAMGLQENLLRGIYAYGFEKPSAIQQ). Positions 71–241 (IVPFCKGLDV…RKFMNQPVRI (171 aa)) constitute a Helicase ATP-binding domain. An ATP-binding site is contributed by 84-91 (AQSGTGKT). A DEAD box motif is present at residues 189–192 (DEAD). The 104-residue stretch at 252-355 (GIKQFYVNVD…QQVSLVINYD (104 aa)) folds into the Helicase C-terminal domain.

This sequence belongs to the DEAD box helicase family. eIF4A subfamily. As to quaternary structure, eIF4F is a multi-subunit complex, the composition of which varies with external and internal environmental conditions. It is composed of at least EIF4A, EIF4E and EIF4G.

The enzyme catalyses ATP + H2O = ADP + phosphate + H(+). ATP-dependent RNA helicase which is a subunit of the eIF4F complex involved in cap recognition and is required for mRNA binding to ribosome. In the current model of translation initiation, eIF4A unwinds RNA secondary structures in the 5'-UTR of mRNAs which is necessary to allow efficient binding of the small ribosomal subunit, and subsequent scanning for the initiator codon. The chain is Eukaryotic initiation factor 4A-13 from Nicotiana tabacum (Common tobacco).